A 218-amino-acid chain; its full sequence is Adenylate kinase (218 aa).

12-17 (GAGKGT) provides a ligand contact to ATP. Residues 32-61 (STGDMLREARSSGTEMGKRVAEVMDRGELV) form an NMP region. Residues threonine 33, arginine 38, 59–61 (ELV), 85–88 (GFPR), and glutamine 92 contribute to the AMP site. Residues 126–164 (GRFTCGNCGEVYHDVTKPTKEPGKCDVCGSTDLRRRADD) are LID. Position 127 (arginine 127) interacts with ATP. Zn(2+) contacts are provided by cysteine 130 and cysteine 133. ATP is bound at residue 136-137 (VY). 2 residues coordinate Zn(2+): cysteine 150 and cysteine 153. Residues arginine 161 and arginine 172 each contribute to the AMP site. Alanine 200 lines the ATP pocket.

This sequence belongs to the adenylate kinase family. In terms of assembly, monomer.

It localises to the cytoplasm. It catalyses the reaction AMP + ATP = 2 ADP. Its pathway is purine metabolism; AMP biosynthesis via salvage pathway; AMP from ADP: step 1/1. Functionally, catalyzes the reversible transfer of the terminal phosphate group between ATP and AMP. Plays an important role in cellular energy homeostasis and in adenine nucleotide metabolism. The chain is Adenylate kinase from Paracoccus denitrificans (strain Pd 1222).